A 451-amino-acid chain; its full sequence is ATP synthase subunit beta (451 aa).

143–150 (GGAGVGKT) is an ATP binding site.

The protein belongs to the ATPase alpha/beta chains family. F-type ATPases have 2 components, CF(1) - the catalytic core - and CF(0) - the membrane proton channel. CF(1) has five subunits: alpha(3), beta(3), gamma(1), delta(1), epsilon(1). CF(0) has three main subunits: a(1), b(2) and c(9-12). The alpha and beta chains form an alternating ring which encloses part of the gamma chain. CF(1) is attached to CF(0) by a central stalk formed by the gamma and epsilon chains, while a peripheral stalk is formed by the delta and b chains.

It localises to the cell membrane. It catalyses the reaction ATP + H2O + 4 H(+)(in) = ADP + phosphate + 5 H(+)(out). Produces ATP from ADP in the presence of a proton gradient across the membrane. The catalytic sites are hosted primarily by the beta subunits. In Coprothermobacter proteolyticus (strain ATCC 35245 / DSM 5265 / OCM 4 / BT), this protein is ATP synthase subunit beta.